Consider the following 249-residue polypeptide: MRPKIVVGNWKLHGSHAFAQALVAQVAAGLPLPGVSVIILPPLLYLSDLTQRFKGEGLAFGAQNVSHHDKGAYTGEVSAAMVADVGAHYTLVGHSERREYHHEDSELVARKFAAALSAGLRPILCVGESLPQREAGQAEVAIAMQLAPVLALVGPQGVARGLIAYEPVWAIGTGRHADPSQVQAMHAFIRGEIARQDARIGDSLLILYGGGIKPCNAAELFSQQDVDGGLIGGASLVADDFLAIARATV.

Substrate is bound at residue asparagine 9 to lysine 11. Histidine 94 functions as the Electrophile in the catalytic mechanism. The active-site Proton acceptor is the glutamate 166. Substrate contacts are provided by residues glycine 172 and glycine 232–glycine 233.

Belongs to the triosephosphate isomerase family. In terms of assembly, homodimer.

The protein resides in the cytoplasm. The enzyme catalyses D-glyceraldehyde 3-phosphate = dihydroxyacetone phosphate. It functions in the pathway carbohydrate biosynthesis; gluconeogenesis. It participates in carbohydrate degradation; glycolysis; D-glyceraldehyde 3-phosphate from glycerone phosphate: step 1/1. Involved in the gluconeogenesis. Catalyzes stereospecifically the conversion of dihydroxyacetone phosphate (DHAP) to D-glyceraldehyde-3-phosphate (G3P). The chain is Triosephosphate isomerase from Xylella fastidiosa (strain M12).